The following is a 702-amino-acid chain: Kinesin-like protein KIF3A (702 aa).

A Kinesin motor domain is found at 14–345 (NVKVVVRCRP…LRYANRAKNI (332 aa)). 100–107 (GQTGTGKT) is a binding site for ATP. Residues 355 to 593 (PKDALLRQFQ…LSRELRLQML (239 aa)) adopt a coiled-coil conformation. 2 disordered regions span residues 372–424 (KKLE…KMIE) and 667–702 (LMKL…SLLQ). Positions 376-400 (EGEEISGSDISGSEEDDDEEGEVGE) are enriched in acidic residues. Over residues 410 to 424 (DQAGKKKVSPDKMIE) the composition is skewed to basic and acidic residues. Residues 600-702 (PRDYQEMIEN…PETVIDSLLQ (103 aa)) are globular. The segment covering 675–690 (TSKGKARPKTGRRKRS) has biased composition (basic residues). The residue at position 690 (serine 690) is a Phosphoserine.

Belongs to the TRAFAC class myosin-kinesin ATPase superfamily. Kinesin family. Kinesin II subfamily. Heterodimer of KIF3A and KIF3B. Interacts with CIMAP3. Interacts with CLN3. Interacts with DCTN1. Interacts with FLCN. Interacts with AP3B1.

It localises to the cytoplasm. It is found in the cytoskeleton. The protein localises to the cell projection. Its subcellular location is the cilium. The protein resides in the microtubule organizing center. It localises to the centrosome. It is found in the centriole. In terms of biological role, microtubule-based anterograde translocator for membranous organelles. Plus end-directed microtubule sliding activity in vitro. Plays a role in primary cilia formation. Plays a role in centriole cohesion and subdistal appendage organization and function. Regulates the formation of the subdistal appendage via recruitment of DCTN1 to the centriole. Also required for ciliary basal feet formation and microtubule anchoring to mother centriole. The polypeptide is Kinesin-like protein KIF3A (KIF3A) (Macaca fascicularis (Crab-eating macaque)).